A 388-amino-acid polypeptide reads, in one-letter code: 1D-myo-inositol 2-acetamido-2-deoxy-alpha-D-glucopyranoside deacetylase (388 aa).

H6, D9, and H144 together coordinate Zn(2+). The interval 369-388 is disordered; sequence LDQADEGAAHDTSEQSGQRR.

This sequence belongs to the MshB deacetylase family. Zn(2+) serves as cofactor.

The enzyme catalyses 1D-myo-inositol 2-acetamido-2-deoxy-alpha-D-glucopyranoside + H2O = 1D-myo-inositol 2-amino-2-deoxy-alpha-D-glucopyranoside + acetate. In terms of biological role, catalyzes the deacetylation of 1D-myo-inositol 2-acetamido-2-deoxy-alpha-D-glucopyranoside (GlcNAc-Ins) in the mycothiol biosynthesis pathway. The sequence is that of 1D-myo-inositol 2-acetamido-2-deoxy-alpha-D-glucopyranoside deacetylase from Corynebacterium kroppenstedtii (strain DSM 44385 / JCM 11950 / CIP 105744 / CCUG 35717).